Consider the following 411-residue polypeptide: Serine--tRNA ligase (411 aa).

An L-serine-binding site is contributed by 226–228 (TSE). 257–259 (RQE) serves as a coordination point for ATP. Residue Glu-280 coordinates L-serine. 344-347 (EISS) contributes to the ATP binding site. Ser-379 serves as a coordination point for L-serine.

Belongs to the class-II aminoacyl-tRNA synthetase family. Type-1 seryl-tRNA synthetase subfamily. As to quaternary structure, homodimer. The tRNA molecule binds across the dimer.

It is found in the cytoplasm. It carries out the reaction tRNA(Ser) + L-serine + ATP = L-seryl-tRNA(Ser) + AMP + diphosphate + H(+). The catalysed reaction is tRNA(Sec) + L-serine + ATP = L-seryl-tRNA(Sec) + AMP + diphosphate + H(+). Its pathway is aminoacyl-tRNA biosynthesis; selenocysteinyl-tRNA(Sec) biosynthesis; L-seryl-tRNA(Sec) from L-serine and tRNA(Sec): step 1/1. In terms of biological role, catalyzes the attachment of serine to tRNA(Ser). Is also able to aminoacylate tRNA(Sec) with serine, to form the misacylated tRNA L-seryl-tRNA(Sec), which will be further converted into selenocysteinyl-tRNA(Sec). The chain is Serine--tRNA ligase from Campylobacter lari (strain RM2100 / D67 / ATCC BAA-1060).